A 189-amino-acid polypeptide reads, in one-letter code: Protein OXIDATIVE STRESS 3 LIKE 2 (189 aa).

2 disordered regions span residues 22–49 and 128–147; these read SSSTSSDSIGENSDDDEGGENEIESSYN and AMSQREGDSSSSGDDSLPTL. Residues 33 to 44 are compositionally biased toward acidic residues; sequence NSDDDEGGENEI.

The protein localises to the nucleus. The chain is Protein OXIDATIVE STRESS 3 LIKE 2 from Arabidopsis thaliana (Mouse-ear cress).